Here is a 495-residue protein sequence, read N- to C-terminus: Glycerol kinase (495 aa).

Thr-13 is an ADP binding site. ATP contacts are provided by Thr-13, Thr-14, and Ser-15. Residue Thr-13 coordinates sn-glycerol 3-phosphate. Arg-17 is a binding site for ADP. Residues Arg-83, Glu-84, Tyr-135, and Asp-244 each coordinate sn-glycerol 3-phosphate. Arg-83, Glu-84, Tyr-135, Asp-244, and Gln-245 together coordinate glycerol. ADP is bound by residues Thr-266 and Gly-309. 4 residues coordinate ATP: Thr-266, Gly-309, Gln-313, and Gly-410. ADP is bound by residues Gly-410 and Asn-414.

This sequence belongs to the FGGY kinase family.

The catalysed reaction is glycerol + ATP = sn-glycerol 3-phosphate + ADP + H(+). It functions in the pathway polyol metabolism; glycerol degradation via glycerol kinase pathway; sn-glycerol 3-phosphate from glycerol: step 1/1. Its activity is regulated as follows. Inhibited by fructose 1,6-bisphosphate (FBP). Its function is as follows. Key enzyme in the regulation of glycerol uptake and metabolism. Catalyzes the phosphorylation of glycerol to yield sn-glycerol 3-phosphate. The chain is Glycerol kinase from Shewanella woodyi (strain ATCC 51908 / MS32).